Here is a 494-residue protein sequence, read N- to C-terminus: MGRLVEAIIASILLSLCFTITKSAPKSALITNLPGFNGTFPSKHYAGYVAIDKHRNKNLWYYFVESERNASVDPVVLWLNGGPGCSSMDGFVYEHGPFNFEPKKKNSHLLHLNPYSWSKVSNIIYLDSPVGVGFSYSNDNADYTTDDTKTASDTHTFLLEWFKMFPEFQSNPFFISGESYAGIYVPTLAAEVVKGHKNVTKPVINFKGYLVGNGVTDEVFDGNALVPFTHGMGLISDELYEETKLVCNGTYYTGGQSGVSKECAGKLKTVSDTVNLLNLYNILEPCYHGTSLSALDIEFLPKSLLTLGKTEKPMAVRKRMFGRAWPLGAVVRPGIVPSWSQLLAGFGVPCIDDTVATKWLNDPAVRKAVHAKEEKAIGNWELCSSNLEYRHDTGSMIEYHRNLTLSGFRALIFSGDHDMCVPYTGSEAWTKAMGYKVVDEWRPWMSNNQVAGFTQGYANNLTFLTIKGAGHTVPEYKPRESLDFYSRFLAGEKI.

A signal peptide spans 1–23 (MGRLVEAIIASILLSLCFTITKS). Residues asparagine 37 and asparagine 69 are each glycosylated (N-linked (GlcNAc...) asparagine). 3 cysteine pairs are disulfide-bonded: cysteine 85/cysteine 383, cysteine 247/cysteine 263, and cysteine 286/cysteine 350. The active site involves serine 179. 2 N-linked (GlcNAc...) asparagine glycosylation sites follow: asparagine 198 and asparagine 248. Asparagine 402 carries an N-linked (GlcNAc...) asparagine glycan. Residue aspartate 418 is part of the active site. Asparagine 460 carries N-linked (GlcNAc...) asparagine glycosylation. Residue histidine 471 is part of the active site.

This sequence belongs to the peptidase S10 family. In terms of tissue distribution, expressed in flowers and siliques.

Its subcellular location is the secreted. Its function is as follows. Probable carboxypeptidase. This chain is Serine carboxypeptidase-like 21 (SCPL21), found in Arabidopsis thaliana (Mouse-ear cress).